A 760-amino-acid polypeptide reads, in one-letter code: Polyribonucleotide nucleotidyltransferase (760 aa).

Mg(2+) contacts are provided by Asp-492 and Asp-498. The KH domain maps to 559 to 618 (PQHAEVFVNPDIIRIIIGPGGKNIKAITATTGASIDIEDSGRVSIFAPTLEAMEMAREMV). Residues 628 to 702 (GKNYTGKVRK…SRKAVLLEEQ (75 aa)) form the S1 motif domain. A disordered region spans residues 706-760 (WKPEDTARPSGPREGGRRDGGRDGRRDGGRDGRRDGGRDGGRRDGGRRDGGRDRN). Positions 719–760 (EGGRRDGGRDGRRDGGRDGRRDGGRDGGRRDGGRRDGGRDRN) are enriched in basic and acidic residues.

This sequence belongs to the polyribonucleotide nucleotidyltransferase family. The cofactor is Mg(2+).

The protein localises to the cytoplasm. The catalysed reaction is RNA(n+1) + phosphate = RNA(n) + a ribonucleoside 5'-diphosphate. In terms of biological role, involved in mRNA degradation. Catalyzes the phosphorolysis of single-stranded polyribonucleotides processively in the 3'- to 5'-direction. The sequence is that of Polyribonucleotide nucleotidyltransferase from Nitratidesulfovibrio vulgaris (strain ATCC 29579 / DSM 644 / CCUG 34227 / NCIMB 8303 / VKM B-1760 / Hildenborough) (Desulfovibrio vulgaris).